A 381-amino-acid chain; its full sequence is Palmitoyltransferase SWF1 (381 aa).

At 1–4 (MWLK) the chain is on the lumenal side. A helical transmembrane segment spans residues 5 to 25 (IYLLSILAISVFTFVFLFGAL). Residues 26 to 64 (PQFEDTAVWKFRKWLSNRPAAIRSWDSKYCGGRLSVVGD) lie on the Cytoplasmic side of the membrane. The helical transmembrane segment at 65-85 (FCGSVVAPAAPWSVPILYCAF) threads the bilayer. At 86–107 (TTYMFSAYYEDLHPFIAENHWY) the chain is on the lumenal side. The helical transmembrane segment at 108–128 (YAWLAPVAYTILVVSFVLATF) threads the bilayer. Over 129–201 (SDPGKITKQN…NTVGLYNYRW (73 aa)) the chain is Cytoplasmic. The 51-residue stretch at 157–207 (TECSTCKFTKPARSKHDRFTNKCVAKFDHYCLWINNTVGLYNYRWFLFFLL) folds into the DHHC domain. The active-site S-palmitoyl cysteine intermediate is Cys187. A helical membrane pass occupies residues 202–222 (FLFFLLGNVWTLCWGALLAGL). The Lumenal segment spans residues 223-257 (KMIVMVAAEYKDHPKPLPSIFSQWWQVMITNENKR). The chain crosses the membrane as a helical span at residues 258-278 (VGIIFLLSVSTGALACAFTAM). Residues 279-381 (HFYYIYLGAT…KAVMFPNSAY (103 aa)) lie on the Cytoplasmic side of the membrane.

This sequence belongs to the DHHC palmitoyltransferase family. SWF1 subfamily.

It localises to the endoplasmic reticulum membrane. It catalyses the reaction L-cysteinyl-[protein] + hexadecanoyl-CoA = S-hexadecanoyl-L-cysteinyl-[protein] + CoA. In terms of biological role, palmitoyltransferase that targets several endosomal SNAREs. Palmitoylates the SNAREs at cysteine residues close to the cytoplasmic end of their transmembrane domain. May have a role in the cellular quality control of transmembrane domain-containing proteins. The chain is Palmitoyltransferase SWF1 (SWF1) from Yarrowia lipolytica (strain CLIB 122 / E 150) (Yeast).